The sequence spans 276 residues: Secretagogin (276 aa).

EF-hand domains are found at residues 12 to 47 (LDAA…MLMK), 58 to 93 (NLHK…EDEN), 105 to 140 (DSSV…LFLH), 149 to 184 (KLEE…QENF), 197 to 232 (ERKR…MMEL), and 240 to 276 (VDLD…KINP). Residues aspartate 25, aspartate 27, tyrosine 31, glutamate 36, aspartate 71, serine 73, aspartate 75, arginine 77, glutamate 82, aspartate 118, aspartate 120, serine 122, glutamate 129, aspartate 162, asparagine 164, aspartate 166, arginine 168, aspartate 173, aspartate 210, serine 212, threonine 214, glutamate 221, aspartate 254, asparagine 256, aspartate 258, lysine 260, and glutamate 265 each coordinate Ca(2+).

In terms of tissue distribution, expressed at high levels in the pancreatic islets of Langerhans and to a much lesser extent in the gastrointestinal tract (stomach, small intestine and colon), the adrenal medulla and cortex and the thyroid C-cells. In the brain, the expression is restricted to distinct subtypes of neurons with highest expression in the molecular layer of the cerebellum (stellate and basket cells), in the anterior part of the pituitary gland, in the thalamus, in the hypothalamus and in a subgroup of neocortical neurons.

The protein localises to the cytoplasm. It is found in the secreted. Its subcellular location is the cytoplasmic vesicle. The protein resides in the secretory vesicle membrane. This is Secretagogin (SCGN) from Homo sapiens (Human).